The chain runs to 73 residues: Potassium channel toxin alpha-KTx 27.4 (73 aa).

The N-terminal stretch at Met-1–Ala-26 is a signal peptide.

It belongs to the short scorpion toxin superfamily. Potassium channel inhibitor family. Alpha-KTx 27 subfamily. Contains 4 disulfide bonds. As to expression, expressed by the venom gland.

It localises to the secreted. The polypeptide is Potassium channel toxin alpha-KTx 27.4 (Mesobuthus gibbosus (Mediterranean checkered scorpion)).